Reading from the N-terminus, the 1062-residue chain is Suppressor of mar1-1 protein (1062 aa).

A compositionally biased stretch (polar residues) spans 1–17 (MSENTTAPSDNITNEQR). Disordered stretches follow at residues 1-27 (MSEN…DDVD), 188-217 (ENSS…ASTS), 267-337 (TKQE…KKRT), 370-398 (SSKF…SATQ), 595-634 (EIST…QQEG), and 681-804 (SGEE…GNLG). S2 carries the post-translational modification N-acetylserine. Residues 189 to 205 (NSSNNTSSQHNTSSSRR) show a composition bias toward low complexity. 3 stretches are compositionally biased toward polar residues: residues 267–279 (TKQE…APSS), 287–298 (SLTSVPQRTNNE), and 305–323 (STAN…NNLI). Basic residues predominate over residues 325 to 335 (IKRKRGRPPKK). Composition is skewed to polar residues over residues 370–385 (SSKF…NPVS) and 610–629 (TKGS…GISD). Phosphoserine occurs at positions 378, 379, 628, and 681. The span at 685 to 699 (AITKENAEYERKTPG) shows a compositional bias: basic and acidic residues. T697 is subject to Phosphothreonine. The segment covering 704–716 (TTFVPLENSQPSD) has biased composition (polar residues). S712 carries the phosphoserine; by ATM or ATR modification. S738 bears the Phosphoserine mark. A compositionally biased stretch (polar residues) spans 781-793 (KGTSSIHNDTESA). At T817 the chain carries Phosphothreonine.

Interacts with RFM1. This interaction is required to recruit HST1.

The protein resides in the nucleus. Functionally, DNA-binding protein that specifically binds the regulatory region of middle sporulation genes (MSE). Required for the repression of middle sporulation genes during vegetative growth. Represses expression via the recruitment of histone deacetylase HST1. The chain is Suppressor of mar1-1 protein (SUM1) from Saccharomyces cerevisiae (strain ATCC 204508 / S288c) (Baker's yeast).